Reading from the N-terminus, the 265-residue chain is Inositol monophosphatase 2 (265 aa).

Mg(2+)-binding residues include E65, D86, L88, and D89. E65 provides a ligand contact to substrate. Residues 88–91 (LDGT), 189–191 (GSC), E208, and D216 each bind substrate. Mg(2+) is bound at residue D216.

It belongs to the inositol monophosphatase superfamily. It depends on Mg(2+) as a cofactor. In terms of tissue distribution, low expression in roots, stems, leaves, flowers and young and mature green fruits. Expressed in the stem/leaf junctions, below the shoot apex and on the abaxial side of the petiole of the first expanded leaflets.

The enzyme catalyses a myo-inositol phosphate + H2O = myo-inositol + phosphate. The protein operates within polyol metabolism; myo-inositol biosynthesis; myo-inositol from D-glucose 6-phosphate: step 2/2. In terms of biological role, responsible for the provision of inositol required for synthesis of phosphatidylinositol and polyphosphoinositides. The sequence is that of Inositol monophosphatase 2 (IMP2) from Solanum lycopersicum (Tomato).